The chain runs to 328 residues: Tyrosine recombinase XerC (328 aa).

A Core-binding (CB) domain is found at 13 to 100 (QAPHPQIAAY…AWRGWFKWMA (88 aa)). The Tyr recombinase domain occupies 122–319 (RLPKALSVEQ…DFQHLAKIYD (198 aa)). Residues Arg-162, Lys-197, His-271, Arg-274, and His-297 contribute to the active site. Tyr-306 serves as the catalytic O-(3'-phospho-DNA)-tyrosine intermediate.

This sequence belongs to the 'phage' integrase family. XerC subfamily. Forms a cyclic heterotetrameric complex composed of two molecules of XerC and two molecules of XerD.

Its subcellular location is the cytoplasm. Functionally, site-specific tyrosine recombinase, which acts by catalyzing the cutting and rejoining of the recombining DNA molecules. The XerC-XerD complex is essential to convert dimers of the bacterial chromosome into monomers to permit their segregation at cell division. It also contributes to the segregational stability of plasmids. The chain is Tyrosine recombinase XerC from Ralstonia pickettii (strain 12J).